The following is a 542-amino-acid chain: Phosphoacetylglucosamine mutase (542 aa).

Met1 carries the N-acetylmethionine modification. Thr62 carries the post-translational modification Phosphothreonine. The active-site Phosphoserine intermediate is the Ser64. Ser64, Asp276, Asp278, and Asp280 together coordinate Mg(2+). Ser64 bears the Phosphoserine mark. Substrate-binding positions include 370–372 (EAN), 496–500 (RPSGT), and Arg505.

Belongs to the phosphohexose mutase family. It depends on Mg(2+) as a cofactor. As to expression, found in many tissues except lung. Relatively high expression in pancreas, heart, liver, and placenta, and relatively low expression in brain, skeletal muscle and kidney.

It catalyses the reaction N-acetyl-alpha-D-glucosamine 1-phosphate = N-acetyl-D-glucosamine 6-phosphate. The protein operates within nucleotide-sugar biosynthesis; UDP-N-acetyl-alpha-D-glucosamine biosynthesis; N-acetyl-alpha-D-glucosamine 1-phosphate from alpha-D-glucosamine 6-phosphate (route I): step 2/2. Its function is as follows. Catalyzes the conversion of GlcNAc-6-P into GlcNAc-1-P during the synthesis of uridine diphosphate/UDP-GlcNAc, a sugar nucleotide critical to multiple glycosylation pathways including protein N- and O-glycosylation. This is Phosphoacetylglucosamine mutase from Homo sapiens (Human).